Consider the following 308-residue polypeptide: ADP-L-glycero-D-manno-heptose-6-epimerase (308 aa).

Residues 10–11 (MI), 31–32 (DN), Lys-38, Lys-53, 75–79 (EGACS), and Asn-92 contribute to the NADP(+) site. Tyr-140 serves as the catalytic Proton acceptor. Lys-144 contacts NADP(+). Asn-169 is a substrate binding site. The NADP(+) site is built by Val-170 and Lys-178. The active-site Proton acceptor is the Lys-178. Substrate is bound by residues Ser-180, His-187, 201-204 (FEGS), Arg-209, and Tyr-272.

The protein belongs to the NAD(P)-dependent epimerase/dehydratase family. HldD subfamily. In terms of assembly, homopentamer. It depends on NADP(+) as a cofactor.

It carries out the reaction ADP-D-glycero-beta-D-manno-heptose = ADP-L-glycero-beta-D-manno-heptose. It functions in the pathway nucleotide-sugar biosynthesis; ADP-L-glycero-beta-D-manno-heptose biosynthesis; ADP-L-glycero-beta-D-manno-heptose from D-glycero-beta-D-manno-heptose 7-phosphate: step 4/4. In terms of biological role, catalyzes the interconversion between ADP-D-glycero-beta-D-manno-heptose and ADP-L-glycero-beta-D-manno-heptose via an epimerization at carbon 6 of the heptose. The sequence is that of ADP-L-glycero-D-manno-heptose-6-epimerase from Actinobacillus pleuropneumoniae serotype 5b (strain L20).